Here is a 178-residue protein sequence, read N- to C-terminus: Nucleoside-triphosphatase THEP1 (178 aa).

Residues 7 to 14 and 102 to 109 each bind ATP; these read GEPGVGKT and VIIIDEIG.

This sequence belongs to the THEP1 NTPase family. As to quaternary structure, monomer.

It carries out the reaction a ribonucleoside 5'-triphosphate + H2O = a ribonucleoside 5'-diphosphate + phosphate + H(+). In terms of biological role, has nucleotide phosphatase activity towards ATP, GTP, CTP, TTP and UTP. May hydrolyze nucleoside diphosphates with lower efficiency. Does not have kinase activity. The protein is Nucleoside-triphosphatase THEP1 of Aquifex aeolicus (strain VF5).